The sequence spans 247 residues: Segregation and condensation protein A (247 aa).

It belongs to the ScpA family. As to quaternary structure, component of a cohesin-like complex composed of ScpA, ScpB and the Smc homodimer, in which ScpA and ScpB bind to the head domain of Smc. The presence of the three proteins is required for the association of the complex with DNA.

The protein resides in the cytoplasm. Participates in chromosomal partition during cell division. May act via the formation of a condensin-like complex containing Smc and ScpB that pull DNA away from mid-cell into both cell halves. The polypeptide is Segregation and condensation protein A (Lactobacillus johnsonii (strain CNCM I-12250 / La1 / NCC 533)).